A 469-amino-acid polypeptide reads, in one-letter code: Ectonucleoside triphosphate diphosphohydrolase 5 (469 aa).

The signal sequence occupies residues 1–24 (MATPWGAVFFLLMIACAGSTVFYR). The Proton acceptor role is filled by glutamate 172. N-linked (GlcNAc...) asparagine glycosylation occurs at asparagine 232. 2 cysteine pairs are disulfide-bonded: cysteine 272–cysteine 303 and cysteine 363–cysteine 377.

This sequence belongs to the GDA1/CD39 NTPase family. As to quaternary structure, monomer; active form. Homodimer; disulfide-linked. Homodimers are enzymatically inactive. Ca(2+) serves as cofactor. Requires Mg(2+) as cofactor. N-glycosylated; high-mannose type. Expressed in fetal cells and most adult tissues.

The protein localises to the endoplasmic reticulum. The protein resides in the secreted. The enzyme catalyses a ribonucleoside 5'-diphosphate + H2O = a ribonucleoside 5'-phosphate + phosphate + H(+). The catalysed reaction is GDP + H2O = GMP + phosphate + H(+). It carries out the reaction UDP + H2O = UMP + phosphate + H(+). It catalyses the reaction IDP + H2O = IMP + phosphate + H(+). The enzyme catalyses CDP + H2O = CMP + phosphate + H(+). The catalysed reaction is ADP + H2O = AMP + phosphate + H(+). It participates in protein modification; protein glycosylation. Its function is as follows. Hydrolyzes nucleoside diphosphates with a preference for GDP, IDP and UDP compared to ADP and CDP. In the lumen of the endoplasmic reticulum, hydrolyzes UDP that acts as an end-product feedback inhibitor of the UDP-Glc:glycoprotein glucosyltransferases. UMP can be transported back by an UDP-sugar antiporter to the cytosol where it is consumed to regenerate UDP-glucose. Therefore, it positively regulates protein reglucosylation by clearing UDP from the ER lumen and by promoting the regeneration of UDP-glucose. Protein reglucosylation is essential to proper glycoprotein folding and quality control in the ER. The sequence is that of Ectonucleoside triphosphate diphosphohydrolase 5 (ENTPD5) from Mesocricetus auratus (Golden hamster).